An 866-amino-acid polypeptide reads, in one-letter code: DNA topoisomerase 3-beta (866 aa).

The Toprim domain occupies 4–149 (TVLMVAEKPS…RIFRAKFSSV (146 aa)). 3 residues coordinate Mg(2+): E10, D114, and D116. Residues 165-585 (SKDEALAVDA…HVLQQFMKKY (421 aa)) form the Topo IA-type catalytic domain. The tract at residues 207-212 (SYGPCQ) is interaction with DNA. The active-site O-(5'-phospho-DNA)-tyrosine intermediate is the Y329. Residues 830-853 (MRRGRGRGRGRGRGRGSSRGRRGS) show a composition bias toward basic residues. The interval 830 to 866 (MRRGRGRGRGRGRGRGSSRGRRGSSRHDDPKMSFRDF) is disordered. Over residues 854-866 (SRHDDPKMSFRDF) the composition is skewed to basic and acidic residues.

The protein belongs to the type IA topoisomerase family. The cofactor is Mg(2+).

The catalysed reaction is ATP-independent breakage of single-stranded DNA, followed by passage and rejoining.. Its function is as follows. Releases the supercoiling and torsional tension of DNA introduced during the DNA replication and transcription by transiently cleaving and rejoining one strand of the DNA duplex. Introduces a single-strand break via transesterification at a target site in duplex DNA. The scissile phosphodiester is attacked by the catalytic tyrosine of the enzyme, resulting in the formation of a DNA-(5'-phosphotyrosyl)-enzyme intermediate and the expulsion of a 3'-OH DNA strand. The free DNA strand than undergoes passage around the unbroken strand thus removing DNA supercoils. Finally, in the religation step, the DNA 3'-OH attacks the covalent intermediate to expel the active-site tyrosine and restore the DNA phosphodiester backbone. This is DNA topoisomerase 3-beta (TOP3B) from Oryza sativa subsp. japonica (Rice).